We begin with the raw amino-acid sequence, 159 residues long: Large ribosomal subunit protein uL11 (159 aa).

Residues 137-149 (EGKDPREVQREVD) are compositionally biased toward basic and acidic residues. Positions 137–159 (EGKDPREVQREVDSGAWDKLLGG) are disordered.

The protein belongs to the universal ribosomal protein uL11 family. Part of the ribosomal stalk of the 50S ribosomal subunit. Interacts with L10 and the large rRNA to form the base of the stalk. L10 forms an elongated spine to which L12 dimers bind in a sequential fashion forming a multimeric L10(L12)X complex.

Forms part of the ribosomal stalk which helps the ribosome interact with GTP-bound translation factors. The chain is Large ribosomal subunit protein uL11 from Korarchaeum cryptofilum (strain OPF8).